The sequence spans 295 residues: Small ribosomal subunit biogenesis GTPase RsgA (295 aa).

The CP-type G domain maps to 65 to 223 (KNQLVRPPVA…VLDTPGFTAL (159 aa)). Residues 114 to 117 (NKVD) and 165 to 173 (GPSGVGKSS) each bind GTP. Residues Cys246, Cys251, His253, and Cys259 each coordinate Zn(2+).

The protein belongs to the TRAFAC class YlqF/YawG GTPase family. RsgA subfamily. As to quaternary structure, monomer. Associates with 30S ribosomal subunit, binds 16S rRNA. Requires Zn(2+) as cofactor.

The protein localises to the cytoplasm. In terms of biological role, one of several proteins that assist in the late maturation steps of the functional core of the 30S ribosomal subunit. Helps release RbfA from mature subunits. May play a role in the assembly of ribosomal proteins into the subunit. Circularly permuted GTPase that catalyzes slow GTP hydrolysis, GTPase activity is stimulated by the 30S ribosomal subunit. The protein is Small ribosomal subunit biogenesis GTPase RsgA of Caldanaerobacter subterraneus subsp. tengcongensis (strain DSM 15242 / JCM 11007 / NBRC 100824 / MB4) (Thermoanaerobacter tengcongensis).